Consider the following 391-residue polypeptide: Carbamoyl phosphate synthase small chain (391 aa).

A CPSase region spans residues 1 to 187 (MAGVKERAVL…PLPYAWPTLK (187 aa)). Residues Ser-50, Gly-239, and Gly-241 each contribute to the L-glutamine site. One can recognise a Glutamine amidotransferase type-1 domain in the interval 191–376 (RIVVMDFGIK…LEEVEAFHGA (186 aa)). Cys-266 functions as the Nucleophile in the catalytic mechanism. Residues Leu-267, Gln-270, Asn-308, Gly-310, and Tyr-311 each contribute to the L-glutamine site. Catalysis depends on residues His-349 and Glu-351.

This sequence belongs to the CarA family. Composed of two chains; the small (or glutamine) chain promotes the hydrolysis of glutamine to ammonia, which is used by the large (or ammonia) chain to synthesize carbamoyl phosphate. Tetramer of heterodimers (alpha,beta)4.

It carries out the reaction hydrogencarbonate + L-glutamine + 2 ATP + H2O = carbamoyl phosphate + L-glutamate + 2 ADP + phosphate + 2 H(+). It catalyses the reaction L-glutamine + H2O = L-glutamate + NH4(+). It functions in the pathway amino-acid biosynthesis; L-arginine biosynthesis; carbamoyl phosphate from bicarbonate: step 1/1. Its pathway is pyrimidine metabolism; UMP biosynthesis via de novo pathway; (S)-dihydroorotate from bicarbonate: step 1/3. Its function is as follows. Small subunit of the glutamine-dependent carbamoyl phosphate synthetase (CPSase). CPSase catalyzes the formation of carbamoyl phosphate from the ammonia moiety of glutamine, carbonate, and phosphate donated by ATP, constituting the first step of 2 biosynthetic pathways, one leading to arginine and/or urea and the other to pyrimidine nucleotides. The small subunit (glutamine amidotransferase) binds and cleaves glutamine to supply the large subunit with the substrate ammonia. In Thermus thermophilus (strain ATCC BAA-163 / DSM 7039 / HB27), this protein is Carbamoyl phosphate synthase small chain.